A 484-amino-acid chain; its full sequence is tRNA sulfurtransferase (484 aa).

The THUMP domain maps to 63–167 (REMIERLTCT…LDRLFVIHRQ (105 aa)). ATP contacts are provided by residues 185–186 (LM), lysine 267, glycine 289, and glutamine 298. Cysteine 346 and cysteine 457 are joined by a disulfide. A Rhodanese domain is found at 405-483 (VLPGQIVIDI…GHTNVRVYRP (79 aa)). The Cysteine persulfide intermediate role is filled by cysteine 457.

It belongs to the ThiI family.

The protein localises to the cytoplasm. The catalysed reaction is [ThiI sulfur-carrier protein]-S-sulfanyl-L-cysteine + a uridine in tRNA + 2 reduced [2Fe-2S]-[ferredoxin] + ATP + H(+) = [ThiI sulfur-carrier protein]-L-cysteine + a 4-thiouridine in tRNA + 2 oxidized [2Fe-2S]-[ferredoxin] + AMP + diphosphate. It catalyses the reaction [ThiS sulfur-carrier protein]-C-terminal Gly-Gly-AMP + S-sulfanyl-L-cysteinyl-[cysteine desulfurase] + AH2 = [ThiS sulfur-carrier protein]-C-terminal-Gly-aminoethanethioate + L-cysteinyl-[cysteine desulfurase] + A + AMP + 2 H(+). It participates in cofactor biosynthesis; thiamine diphosphate biosynthesis. Functionally, catalyzes the ATP-dependent transfer of a sulfur to tRNA to produce 4-thiouridine in position 8 of tRNAs, which functions as a near-UV photosensor. Also catalyzes the transfer of sulfur to the sulfur carrier protein ThiS, forming ThiS-thiocarboxylate. This is a step in the synthesis of thiazole, in the thiamine biosynthesis pathway. The sulfur is donated as persulfide by IscS. The sequence is that of tRNA sulfurtransferase from Pseudomonas aeruginosa (strain LESB58).